A 1017-amino-acid polypeptide reads, in one-letter code: MMITADLIWDENLDNDCEVSKDIWEDDTFIDKSYLKVVLPSYDGVDTPIVYHFKLNDDLKINSIKIPTNSIGNLGKFGRLNTCSLEAVSGEPPVLKEIIIKIDERLYDKLALLPKANEKKQYFQIKYNLVNKQSVIHEGNIWGHVCEVVETKPFSQGVIDFSVTDIVLIRSKILSVENKHDRSLVNLQAFHDLSRIPLKCLHYPVERSLLLPEPPFDDDDSIYVFFPFDLLSKLKISSGSFVRLSNSKNSVLVRAFLLQSPNHYAVDGIYTTPFVLAQFDELPLVEVEPVYNNELAFPTASEVVISKVGNVLHTQKRYQELILQKLRYYFLTARRILSNGSLIPITIDSSFDEIILEDIDLDVNTIKSDDDCIVWFVVSNRKFENISNYDPKAEFFVDPKHTKLITSAMENRSLSSNTFNSALKYYGLPGVFHYRPDIFPVVNDIKNVINTHAEANKKVPNLPMILNLSSNVPKVGKASILRSIAIDLSYQFVDIDTLSVVFSSGSSDIATTFLGYLKGKLENLLPFTGNTIILIKHIDHILKKVDQNQDIQQSRQVKALEGDLISFIKSYSRIYPGVVFAFTSASIDNLPEGFRSEIKFDYVVHPPNEKQRRSIIDELLSTSDLFQKYGNRKLRIQCSNEIEISTLSLHSAGLSPYDIQYIISLAVADSLRKCNNYLLWRQNKIKVDMISIQNALEKVRSDYSASIGAPSIPNVTWDDVGGLSSVKDAIMETIDLPLKHPELFGSGLKKRSGILFYGPPGTGKTLLAKAIATNFSLNFFSVKGPELLNMYIGESEANVRRVFQKARDAKPCVIFFDEVDSVAPKRGNQGDSGGVMDRIVSQLLAELDGMSSDGDGVFIIGATNRPDLLDEALLRPGRFDKLIYLGIADTREKQANIMRALTRKFKVSSDINFDELVSDFPFSYTGADFYALCSDAMLKAMTRISKEIDEKVDKYNQDNGTSISIRYWFDHVCSDEDTDVIVKKEDFLNANKELIPSVSQQELEHYKQIRANFEDSK.

758-765 (GPPGTGKT) contributes to the ATP binding site.

The protein belongs to the AAA ATPase family. As to quaternary structure, interacts with PEX1; forming the PEX1-PEX6 AAA ATPase complex, which is composed of a heterohexamer formed by a trimer of PEX1-PEX6 dimers.

It localises to the cytoplasm. Its subcellular location is the cytosol. The protein localises to the peroxisome membrane. The catalysed reaction is ATP + H2O = ADP + phosphate + H(+). Its function is as follows. Component of the PEX1-PEX6 AAA ATPase complex, a protein dislocase complex that mediates the ATP-dependent extraction of the PEX5 receptor from peroxisomal membranes, an essential step for PEX5 recycling. Specifically recognizes PEX5 monoubiquitinated at 'Cys-6', and pulls it out of the peroxisome lumen through the PEX2-PEX10-PEX12 retrotranslocation channel. Extraction by the PEX1-PEX6 AAA ATPase complex is accompanied by unfolding of the TPR repeats and release of bound cargo from PEX5. This Candida glabrata (strain ATCC 2001 / BCRC 20586 / JCM 3761 / NBRC 0622 / NRRL Y-65 / CBS 138) (Yeast) protein is Peroxisomal ATPase PEX6 (PEX6).